The following is an 85-amino-acid chain: Large ribosomal subunit protein bL27 (85 aa).

Positions 1–20 are disordered; it reads MAHKKAGGSTRNGRDSEAKR.

The protein belongs to the bacterial ribosomal protein bL27 family.

This is Large ribosomal subunit protein bL27 from Klebsiella pneumoniae (strain 342).